The chain runs to 329 residues: Large ribosomal subunit protein uL3 (329 aa).

Belongs to the universal ribosomal protein uL3 family. In terms of assembly, part of the 50S ribosomal subunit. Forms a cluster with proteins L14 and L24e.

Functionally, one of the primary rRNA binding proteins, it binds directly near the 3'-end of the 23S rRNA, where it nucleates assembly of the 50S subunit. The sequence is that of Large ribosomal subunit protein uL3 from Picrophilus torridus (strain ATCC 700027 / DSM 9790 / JCM 10055 / NBRC 100828 / KAW 2/3).